The sequence spans 352 residues: MDKRATILLKTLIERYIAEGQPVGSRTLSKYSGLDLSPATIRNVMSDLEEMGFIASPHTSAGRVPTPRGYRLFVDTMLTAGPLDILGMHDRMAQQIAGTIAEQVRAQLASHGSESSQRVIAAAAQTLSNLSQFAGIVMTPRRTHAFRQIEFLRLSETRILLIVVTPEGDVQNRIIHTDTPYTPSQLVEAANYINAHYGGMTFDAVRERLRGELNALQADMTSLMQAAVEAGSSAVSDEDPVVISGERKLLEVEDLSSSMDKLRRLFAVFEQKTGLLQLLDVSSRAEGVQIFIGGESSLVPHEDMAVITAPYEVDGKIVGTLGVIGPMRMAYERVIPIVDITAKLLSSTLSQH.

Belongs to the HrcA family.

Functionally, negative regulator of class I heat shock genes (grpE-dnaK-dnaJ and groELS operons). Prevents heat-shock induction of these operons. The polypeptide is Heat-inducible transcription repressor HrcA (Ralstonia nicotianae (strain ATCC BAA-1114 / GMI1000) (Ralstonia solanacearum)).